A 249-amino-acid polypeptide reads, in one-letter code: ATP synthase subunit a, chloroplastic (249 aa).

The next 5 membrane-spanning stretches (helical) occupy residues 40-60, 97-117, 136-156, 201-221, and 222-242; these read QVLI…VIAI, VPFI…GALL, INTT…AGLS, LVVV…VMFL, and GLFT…AYIG.

This sequence belongs to the ATPase A chain family. As to quaternary structure, F-type ATPases have 2 components, CF(1) - the catalytic core - and CF(0) - the membrane proton channel. CF(1) has five subunits: alpha(3), beta(3), gamma(1), delta(1), epsilon(1). CF(0) has four main subunits: a, b, b' and c.

The protein localises to the plastid. The protein resides in the chloroplast thylakoid membrane. Functionally, key component of the proton channel; it plays a direct role in the translocation of protons across the membrane. This Barbarea verna (Land cress) protein is ATP synthase subunit a, chloroplastic.